A 765-amino-acid chain; its full sequence is MTSAVLDWMVQDSRRLAECRHDHPFSLLGPQQLESGQWVVRAWVPEAETVELILDGERLSMQTPHHPWVFEAECSRDPGHHYKLQIRRGGIEHEQFDPWAFRHEWMGEMDRHLFAEGNHHHIWRRMGAHRCQQGGIQGVMFCLWAPNALTVSVIGNLNSWDGRYHPMQQRLGGIWELFVPELEEGHFYKYEIRTQDGHCYQKADPYGFQHEVRPDTSSIVSHLDGFQWNDDAWINSRDRRNPLDQPISVYEMHLGSWIHASADDPFIEADGTPRPPVPAADLKPGARLLTYPELADRLIPYVKEQGFSHIELMPITEHPFDGSWGYQVTGWYAPTSRYGTPDEFRAFVDRCHAEGIGVIIDWVPGHFPKDSHGLAFFDGCHLYEHADPRIGEHKEWGTLIFNYSRNEVRNFLVANLVFWFDQFHIDGIRVDAVASMLYRDYLRPDGEWLANEHGGRENTEAVRFLQQANHVLFEHFPGALSIAEESTTWPMVTQPTENGGLGFNLKWNMGWMHDMLDYFELDPWFRQFHQNNITFSIWYTYTENFMLALSHDEVVHGKSHLLHKMPGDDWQKYANTRALLAYMWTHPGKKTIFMGMEFGQRAEWNVWGDLQWDLLNYEPHAGVHRMVKELNALYKQEPALWQDDFDQYGFQWIDCNDNRHSVISFMRRESTSGSWLVVVANFTPQSHSHYKVGVPISGFYEEIFNTDAAKYGGSNLGNLGGKPSDEWGIHGYENSLDLCLPPLSLMVFKHDPKKSLAEVTNKERA.

Residue aspartate 431 is the Nucleophile of the active site. Glutamate 484 serves as the catalytic Proton donor.

This sequence belongs to the glycosyl hydrolase 13 family. GlgB subfamily. As to quaternary structure, monomer.

It catalyses the reaction Transfers a segment of a (1-&gt;4)-alpha-D-glucan chain to a primary hydroxy group in a similar glucan chain.. Its pathway is glycan biosynthesis; glycogen biosynthesis. In terms of biological role, catalyzes the formation of the alpha-1,6-glucosidic linkages in glycogen by scission of a 1,4-alpha-linked oligosaccharide from growing alpha-1,4-glucan chains and the subsequent attachment of the oligosaccharide to the alpha-1,6 position. This is 1,4-alpha-glucan branching enzyme GlgB from Synechococcus sp. (strain CC9311).